The chain runs to 254 residues: Nickel import ATP-binding protein NikD (254 aa).

Positions 2–241 constitute an ABC transporter domain; that stretch reads PQQIELRNIA…PKHAVTRSLV (240 aa). 36–43 serves as a coordination point for ATP; the sequence is GGSGSGKS.

It belongs to the ABC transporter superfamily. Nickel importer (TC 3.A.1.5.3) family. As to quaternary structure, the complex is composed of two ATP-binding proteins (NikD and NikE), two transmembrane proteins (NikB and NikC) and a solute-binding protein (NikA).

Its subcellular location is the cell inner membrane. It catalyses the reaction Ni(2+)(out) + ATP + H2O = Ni(2+)(in) + ADP + phosphate + H(+). Its function is as follows. Part of the ABC transporter complex NikABCDE involved in nickel import. Responsible for energy coupling to the transport system. The protein is Nickel import ATP-binding protein NikD of Shigella sonnei (strain Ss046).